Consider the following 559-residue polypeptide: O-fucosyltransferase 37 (559 aa).

A helical; Signal-anchor for type II membrane protein transmembrane segment spans residues 53–73; the sequence is FFLLLISLSLVFSGISFLTFS. Residue Asn-126 is glycosylated (N-linked (GlcNAc...) asparagine). Substrate is bound at residue 331–333; that stretch reads HLR. N-linked (GlcNAc...) asparagine glycosylation is found at Asn-372, Asn-403, Asn-447, and Asn-504.

It belongs to the glycosyltransferase GT106 family.

The protein resides in the membrane. It functions in the pathway glycan metabolism. This is O-fucosyltransferase 37 from Arabidopsis thaliana (Mouse-ear cress).